The chain runs to 457 residues: Phosphoglucosamine mutase (457 aa).

Catalysis depends on S106, which acts as the Phosphoserine intermediate. Residues S106, D245, D247, and D249 each coordinate Mg(2+). S106 is modified (phosphoserine).

It belongs to the phosphohexose mutase family. Mg(2+) is required as a cofactor. Activated by phosphorylation.

The enzyme catalyses alpha-D-glucosamine 1-phosphate = D-glucosamine 6-phosphate. Functionally, catalyzes the conversion of glucosamine-6-phosphate to glucosamine-1-phosphate. This Methylibium petroleiphilum (strain ATCC BAA-1232 / LMG 22953 / PM1) protein is Phosphoglucosamine mutase.